Consider the following 85-residue polypeptide: Alpha-insect toxin Bot14 (85 aa).

The signal sequence occupies residues 1-18; the sequence is MSSLMISTAMKGKAPYRQ. An LCN-type CS-alpha/beta domain is found at 20 to 84; it reads RDGYIAQPHN…GIIVHGEKCH (65 aa). 4 disulfides stabilise this stretch: cysteine 30–cysteine 83, cysteine 34–cysteine 55, cysteine 41–cysteine 65, and cysteine 45–cysteine 67.

It belongs to the long (4 C-C) scorpion toxin superfamily. Sodium channel inhibitor family. Alpha subfamily. In terms of tissue distribution, expressed by the venom gland.

Its subcellular location is the secreted. Alpha toxins bind voltage-independently at site-3 of sodium channels (Nav) and inhibit the inactivation of the activated channels, thereby blocking neuronal transmission. This toxin is active only on insects. This is Alpha-insect toxin Bot14 from Buthus occitanus tunetanus (Common European scorpion).